Consider the following 228-residue polypeptide: UPF0758 protein str1465 (228 aa).

Residues 103–225 form the MPN domain; the sequence is QIMSSQQVAR…YYSFREERED (123 aa). Zn(2+) contacts are provided by His174, His176, and Asp187. The JAMM motif motif lies at 174–187; that stretch reads HNHPSGEAYPSRND.

It belongs to the UPF0758 family.

The protein is UPF0758 protein str1465 of Streptococcus thermophilus (strain CNRZ 1066).